The primary structure comprises 562 residues: Adenylate kinase isoenzyme 5 (562 aa).

Adenylate kinase stretches follow at residues 133-316 (KIIL…VAVD) and 377-559 (KIIF…TAID). 142-147 (GSGKGT) serves as a coordination point for ATP. An NMP 1 region spans residues 162 to 193 (SVGELLRKKIHSASSNRKWSLIAKIITNGELA). AMP is bound by residues R168, 191 to 193 (ELA), 219 to 222 (GFPR), and Q226. Positions 256–266 (KRAEQQGRPDD) are LID 1. R257 provides a ligand contact to ATP. AMP contacts are provided by R263 and R274. Residue 386-391 (GSGKGT) coordinates ATP. Residues 406-435 (STGELLRQELTSESERSKLIRDIMERGDLV) form an NMP 2 region. Residues T407, R412, 433-435 (DLV), 462-465 (GYPR), and Q469 each bind AMP. The interval 499–509 (QRSQSSQRGED) is LID 2. R500 serves as a coordination point for ATP. Positions 506 and 517 each coordinate AMP. An ATP-binding site is contributed by G545.

This sequence belongs to the adenylate kinase family. In terms of assembly, monomer. Interacts with YWHAZ. Brain specific.

Its subcellular location is the cytoplasm. The enzyme catalyses AMP + ATP = 2 ADP. It catalyses the reaction a 2'-deoxyribonucleoside 5'-diphosphate + ATP = a 2'-deoxyribonucleoside 5'-triphosphate + ADP. It carries out the reaction a ribonucleoside 5'-diphosphate + ATP = a ribonucleoside 5'-triphosphate + ADP. Its function is as follows. Nucleoside monophosphate (NMP) kinase that catalyzes the reversible transfer of the terminal phosphate group between nucleoside triphosphates and monophosphates. Active on AMP and dAMP with ATP as a donor. When GTP is used as phosphate donor, the enzyme phosphorylates AMP, CMP, and to a small extent dCMP. Also displays broad nucleoside diphosphate kinase activity. The polypeptide is Adenylate kinase isoenzyme 5 (Ak5) (Mus musculus (Mouse)).